A 131-amino-acid polypeptide reads, in one-letter code: Translation initiation factor 5A (131 aa).

Residue K36 is modified to Hypusine.

The protein belongs to the eIF-5A family. The N-terminus is blocked.

The protein localises to the cytoplasm. Functions by promoting the formation of the first peptide bond. The chain is Translation initiation factor 5A (eif5a) from Sulfolobus acidocaldarius (strain ATCC 33909 / DSM 639 / JCM 8929 / NBRC 15157 / NCIMB 11770).